Consider the following 94-residue polypeptide: Co-chaperonin GroES (94 aa).

It belongs to the GroES chaperonin family. As to quaternary structure, heptamer of 7 subunits arranged in a ring. Interacts with the chaperonin GroEL.

It localises to the cytoplasm. In terms of biological role, together with the chaperonin GroEL, plays an essential role in assisting protein folding. The GroEL-GroES system forms a nano-cage that allows encapsulation of the non-native substrate proteins and provides a physical environment optimized to promote and accelerate protein folding. GroES binds to the apical surface of the GroEL ring, thereby capping the opening of the GroEL channel. The protein is Co-chaperonin GroES of Ehrlichia ruminantium (strain Gardel).